Reading from the N-terminus, the 232-residue chain is Protein FAM228B (232 aa).

It belongs to the FAM228 family.

This Mus musculus (Mouse) protein is Protein FAM228B (Fam228b).